The following is a 231-amino-acid chain: Large ribosomal subunit protein uL1 (231 aa).

The protein belongs to the universal ribosomal protein uL1 family. Part of the 50S ribosomal subunit.

Functionally, binds directly to 23S rRNA. The L1 stalk is quite mobile in the ribosome, and is involved in E site tRNA release. Its function is as follows. Protein L1 is also a translational repressor protein, it controls the translation of the L11 operon by binding to its mRNA. In Polaromonas naphthalenivorans (strain CJ2), this protein is Large ribosomal subunit protein uL1.